The chain runs to 235 residues: Ribonuclease 3 (235 aa).

Residues 6–131 enclose the RNase III domain; it reads IDQLEKLTGH…LIAVIYLDGG (126 aa). E44 contributes to the Mg(2+) binding site. The active site involves D48. Mg(2+) contacts are provided by D117 and E120. The active site involves E120. In terms of domain architecture, DRBM spans 156-225; the sequence is DAKTQLQEWA…AEKILRREGI (70 aa).

The protein belongs to the ribonuclease III family. Homodimer. Mg(2+) serves as cofactor.

The protein resides in the cytoplasm. The enzyme catalyses Endonucleolytic cleavage to 5'-phosphomonoester.. Its function is as follows. Digests double-stranded RNA. Involved in the processing of primary rRNA transcript to yield the immediate precursors to the large and small rRNAs (23S and 16S). Processes some mRNAs, and tRNAs when they are encoded in the rRNA operon. Processes pre-crRNA and tracrRNA of type II CRISPR loci if present in the organism. In Bartonella henselae (strain ATCC 49882 / DSM 28221 / CCUG 30454 / Houston 1) (Rochalimaea henselae), this protein is Ribonuclease 3.